The sequence spans 33 residues: Brevinin-2Rk (33 aa).

An intrachain disulfide couples Cys-27 to Cys-33.

Expressed by the skin glands.

The protein resides in the secreted. Antimicrobial peptide. The chain is Brevinin-2Rk from Pelophylax ridibundus (Marsh frog).